Consider the following 297-residue polypeptide: Tryptophan 2,3-dioxygenase (297 aa).

Substrate-binding positions include 51–55 (FIIQH), Tyr113, and Arg117. Residue His240 participates in heme binding. Residue Thr254 participates in substrate binding.

This sequence belongs to the tryptophan 2,3-dioxygenase family. As to quaternary structure, homotetramer. The cofactor is heme.

It carries out the reaction L-tryptophan + O2 = N-formyl-L-kynurenine. Its pathway is amino-acid degradation; L-tryptophan degradation via kynurenine pathway; L-kynurenine from L-tryptophan: step 1/2. Its function is as follows. Heme-dependent dioxygenase that catalyzes the oxidative cleavage of the L-tryptophan (L-Trp) pyrrole ring and converts L-tryptophan to N-formyl-L-kynurenine. Catalyzes the oxidative cleavage of the indole moiety. The chain is Tryptophan 2,3-dioxygenase from Xanthomonas oryzae pv. oryzae (strain MAFF 311018).